Consider the following 245-residue polypeptide: Nodulation protein G (245 aa).

V11–L35 serves as a coordination point for NAD(+). Substrate is bound at residue S139. Y152 acts as the Proton acceptor in catalysis.

Belongs to the short-chain dehydrogenases/reductases (SDR) family.

Its function is as follows. Proposed to modify Nod factor fatty acyl chain. The polypeptide is Nodulation protein G (nodG) (Rhizobium sp. (strain N33)).